A 199-amino-acid chain; its full sequence is Chaperone protein TorD (199 aa).

The protein belongs to the TorD/DmsD family. TorD subfamily.

It is found in the cytoplasm. In terms of biological role, involved in the biogenesis of TorA. Acts on TorA before the insertion of the molybdenum cofactor and, as a result, probably favors a conformation of the apoenzyme that is competent for acquiring the cofactor. This is Chaperone protein TorD from Escherichia coli (strain ATCC 8739 / DSM 1576 / NBRC 3972 / NCIMB 8545 / WDCM 00012 / Crooks).